The primary structure comprises 123 residues: Large-conductance mechanosensitive channel (123 aa).

Transmembrane regions (helical) follow at residues 14–34 and 67–87; these read VIDMAVGIIVGAAFTSIVKSL and GSFLNAVINFLIISFVVFLMV.

It belongs to the MscL family. Homopentamer.

It localises to the cell membrane. Channel that opens in response to stretch forces in the membrane lipid bilayer. May participate in the regulation of osmotic pressure changes within the cell. This chain is Large-conductance mechanosensitive channel, found in Limosilactobacillus reuteri (strain DSM 20016) (Lactobacillus reuteri).